Reading from the N-terminus, the 42-residue chain is TYCAEIAHNVSTKKRKEIVERAAQLDIVVPTKLARAPSQEDE.

The protein belongs to the eukaryotic ribosomal protein eL32 family.

The sequence is that of Large ribosomal subunit protein eL32 (RPL32) from Zea mays (Maize).